The primary structure comprises 275 residues: 3-methyl-2-oxobutanoate hydroxymethyltransferase (275 aa).

Residues aspartate 51 and aspartate 90 each contribute to the Mg(2+) site. 3-methyl-2-oxobutanoate contacts are provided by residues 51–52 (DS), aspartate 90, and lysine 120. Glutamate 122 is a binding site for Mg(2+). Glutamate 189 serves as the catalytic Proton acceptor.

It belongs to the PanB family. As to quaternary structure, homodecamer; pentamer of dimers. Mg(2+) serves as cofactor.

The protein localises to the cytoplasm. The enzyme catalyses 3-methyl-2-oxobutanoate + (6R)-5,10-methylene-5,6,7,8-tetrahydrofolate + H2O = 2-dehydropantoate + (6S)-5,6,7,8-tetrahydrofolate. The protein operates within cofactor biosynthesis; (R)-pantothenate biosynthesis; (R)-pantoate from 3-methyl-2-oxobutanoate: step 1/2. Its function is as follows. Catalyzes the reversible reaction in which hydroxymethyl group from 5,10-methylenetetrahydrofolate is transferred onto alpha-ketoisovalerate to form ketopantoate. This is 3-methyl-2-oxobutanoate hydroxymethyltransferase from Phenylobacterium zucineum (strain HLK1).